The chain runs to 189 residues: Leucine repeat adapter protein 25 (189 aa).

Serine 28 is subject to Phosphoserine. Residues 54 to 83 (ELSRAARAPDGPRHAAGAANAGPAAGPRRP) are disordered. Over residues 67 to 83 (HAAGAANAGPAAGPRRP) the composition is skewed to low complexity. The stretch at 86–114 (LDSALAALRKEMVGLRQLDMSLLCQLWGL) is one LRR repeat. The segment at 141–175 (DSSYPPDAGLSDDEEPPDASLPPDPPPLTVPQTHN) is disordered. Residues 159-169 (ASLPPDPPPLT) are compositionally biased toward pro residues. Serine 188 is modified (phosphoserine).

This sequence belongs to the FAM89 family. Interacts with SKI. Interacts (via LRR repeat) with CDC42BPA (via AGC-kinase C-terminal domain), CDC42BPB (via AGC-kinase C-terminal domain) and LIMK1 (via LIM zinc-binding domains). Forms a tripartite complex with CDC42BPA, CDC42BPB and LIMK1.

It localises to the cytoplasm. The protein resides in the cell projection. The protein localises to the lamellipodium. Negatively regulates TGF-beta-induced signaling; in cooperation with SKI prevents the translocation of SMAD2 from the nucleus to the cytoplasm in response to TGF-beta. Acts as an adapter that mediates the specific recognition of LIMK1 by CDC42BPA and CDC42BPB in the lamellipodia. LRAP25-mediated CDC42BPA/CDC42BPB targeting to LIMK1 and the lamellipodium results in LIMK1 activation and the subsequent phosphorylation of CFL1 which is important for lamellipodial F-actin regulation. This chain is Leucine repeat adapter protein 25 (FAM89B), found in Homo sapiens (Human).